We begin with the raw amino-acid sequence, 133 residues long: Small ribosomal subunit protein uS9 (133 aa).

The protein belongs to the universal ribosomal protein uS9 family.

The protein is Small ribosomal subunit protein uS9 of Ureaplasma parvum serovar 3 (strain ATCC 700970).